A 493-amino-acid chain; its full sequence is Cytochrome P450 2E1 (493 aa).

298 to 303 (FAGTET) is a substrate binding site. Cys-437 is a binding site for heme.

This sequence belongs to the cytochrome P450 family. As to quaternary structure, interacts with chaperones HSP70 and HSP90; this interaction is required for initial targeting to mitochondria. The cofactor is heme.

The protein localises to the endoplasmic reticulum membrane. The protein resides in the microsome membrane. It is found in the mitochondrion inner membrane. It catalyses the reaction an organic molecule + reduced [NADPH--hemoprotein reductase] + O2 = an alcohol + oxidized [NADPH--hemoprotein reductase] + H2O + H(+). The enzyme catalyses (5Z,8Z,11Z)-eicosatrienoate + reduced [NADPH--hemoprotein reductase] + O2 = 19-hydroxy-(5Z,8Z,11Z)-eicosatrienoate + oxidized [NADPH--hemoprotein reductase] + H2O + H(+). It carries out the reaction (5Z,8Z,11Z,14Z,17Z)-eicosapentaenoate + reduced [NADPH--hemoprotein reductase] + O2 = 19-hydroxy-(5Z,8Z,11Z,14Z,17Z)-eicosapentaenoate + oxidized [NADPH--hemoprotein reductase] + H2O + H(+). The catalysed reaction is (4Z,7Z,10Z,13Z,16Z,19Z)-docosahexaenoate + reduced [NADPH--hemoprotein reductase] + O2 = 21-hydroxy-(4Z,7Z,10Z,13Z,16Z,19Z)-docosahexaenoate + oxidized [NADPH--hemoprotein reductase] + H2O + H(+). It catalyses the reaction dodecanoate + reduced [NADPH--hemoprotein reductase] + O2 = 11-hydroxydodecanoate + oxidized [NADPH--hemoprotein reductase] + H2O + H(+). The enzyme catalyses tetradecanoate + reduced [NADPH--hemoprotein reductase] + O2 = 13-hydroxytetradecanoate + oxidized [NADPH--hemoprotein reductase] + H2O + H(+). It carries out the reaction 4-nitrophenol + NADPH + O2 + H(+) = 4-nitrocatechol + NADP(+) + H2O. It participates in lipid metabolism; fatty acid metabolism. Its activity is regulated as follows. The omega-1 hydroxylase activity is stimulated by cytochrome b5. Its function is as follows. A cytochrome P450 monooxygenase involved in the metabolism of fatty acids. Mechanistically, uses molecular oxygen inserting one oxygen atom into a substrate, and reducing the second into a water molecule, with two electrons provided by NADPH via cytochrome P450 reductase (NADPH--hemoprotein reductase). Catalyzes the hydroxylation of carbon-hydrogen bonds. Hydroxylates fatty acids specifically at the omega-1 position displaying the highest catalytic activity for saturated fatty acids. May be involved in the oxidative metabolism of xenobiotics. The sequence is that of Cytochrome P450 2E1 (CYP2E1) from Oryctolagus cuniculus (Rabbit).